The chain runs to 245 residues: Ribosomal RNA small subunit methyltransferase G (245 aa).

S-adenosyl-L-methionine contacts are provided by residues Gly-90, Leu-95, 140-141 (AE), and Arg-158.

Belongs to the methyltransferase superfamily. RNA methyltransferase RsmG family.

It is found in the cytoplasm. In terms of biological role, specifically methylates the N7 position of guanine in position 518 of 16S rRNA. This Mycobacterium leprae (strain TN) protein is Ribosomal RNA small subunit methyltransferase G.